The primary structure comprises 175 residues: Gamma-crystallin B (175 aa).

Beta/gamma crystallin 'Greek key' domains follow at residues 2–40 and 41–83; these read GKITFYEDRAFQGRSYECTTDCPNLQPYFSRCNSIRVES and GCWM…HLIP. Residues 84–88 are connecting peptide; it reads PHSGT. Beta/gamma crystallin 'Greek key' domains are found at residues 89–129 and 130–172; these read YRMK…NVLE and GSWI…RRVM.

Belongs to the beta/gamma-crystallin family. Monomer.

In terms of biological role, crystallins are the dominant structural components of the vertebrate eye lens. This chain is Gamma-crystallin B (CRYGB), found in Macaca mulatta (Rhesus macaque).